A 502-amino-acid polypeptide reads, in one-letter code: Probable ADP-dependent glucokinase (502 aa).

An N-terminal signal peptide occupies residues 1 to 32; sequence MFSETFVPSIFSYKHRLLHLSVLFFIVPYWYS. Residues 44–497 enclose the ADPK domain; that stretch reads SVETAMFLSW…LLYSQFYRLN (454 aa). Residues Asn-89 and Asn-190 are each glycosylated (N-linked (GlcNAc...) asparagine). Mg(2+)-binding residues include Glu-290, Glu-320, and Asp-481. Asp-481 serves as the catalytic Proton acceptor.

It belongs to the ADP-dependent glucokinase family. In terms of assembly, monomer. It depends on Mg(2+) as a cofactor.

The protein resides in the secreted. It carries out the reaction D-glucose + ADP = D-glucose 6-phosphate + AMP + H(+). It participates in carbohydrate degradation; glycolysis. Its function is as follows. Catalyzes the phosphorylation of D-glucose to D-glucose 6-phosphate using ADP as the phosphate donor. GDP and CDP can replace ADP, but with reduced efficiency. The protein is Probable ADP-dependent glucokinase of Caenorhabditis elegans.